The sequence spans 152 residues: Ribosome maturation factor RimP (152 aa).

The protein belongs to the RimP family.

The protein resides in the cytoplasm. Required for maturation of 30S ribosomal subunits. The protein is Ribosome maturation factor RimP of Desulfatibacillum aliphaticivorans.